A 244-amino-acid chain; its full sequence is Thaumatin-like protein 1 (244 aa).

A signal peptide spans 1–22 (MKFEALIGLVLVFLSEHAGVYS). Cystine bridges form between Cys31/Cys243, Cys79/Cys89, Cys94/Cys101, Cys149/Cys232, Cys154/Cys215, Cys162/Cys178, Cys182/Cys191, and Cys192/Cys202. The N-linked (GlcNAc...) asparagine glycan is linked to Asn150.

Belongs to the thaumatin family. In terms of processing, N-glycosylated. In terms of tissue distribution, style.

The protein localises to the secreted. The polypeptide is Thaumatin-like protein 1 (TL1) (Pyrus pyrifolia (Chinese pear)).